The chain runs to 306 residues: Low-density lipoprotein receptor class A domain-containing protein 4 (306 aa).

The Lumenal segment spans residues Met1–Glu64. Residues Lys16–Leu48 enclose the LDL-receptor class A domain. Disulfide bonds link Cys19–Cys38 and Cys32–Cys47. A helical transmembrane segment spans residues Phe65–Leu85. Over Leu86–Val306 the chain is Cytoplasmic. A PPxY motif 1 motif is present at residues Pro180–Tyr183. Residues Pro208–Arg211 carry the SMAD interaction motif (SIM) motif. A PPxY motif 2 motif is present at residues Pro252–Tyr255. Positions Asn286–Val306 are disordered. A compositionally biased stretch (basic and acidic residues) spans Lys296–Val306.

Belongs to the PMEPA1 family. As to quaternary structure, interacts with PMEPA1. Interacts (via the SMAD interaction motif) with SMAD2 and SMAD3. In terms of tissue distribution, expressed in lymphocytes.

It localises to the early endosome membrane. In terms of biological role, functions as a negative regulator of TGF-beta signaling and thereby probably plays a role in cell proliferation, differentiation, apoptosis, motility, extracellular matrix production and immunosuppression. In the canonical TGF-beta pathway, ZFYVE9/SARA recruits the intracellular signal transducer and transcriptional modulators SMAD2 and SMAD3 to the TGF-beta receptor. Phosphorylated by the receptor, SMAD2 and SMAD3 then form a heteromeric complex with SMAD4 that translocates to the nucleus to regulate transcription. Through interaction with SMAD2 and SMAD3, LDLRAD4 may compete with ZFYVE9 and SMAD4 and prevent propagation of the intracellular signal. The protein is Low-density lipoprotein receptor class A domain-containing protein 4 (LDLRAD4) of Homo sapiens (Human).